Consider the following 237-residue polypeptide: Neural retina-specific leucine zipper protein (237 aa).

Residues lysine 20 and lysine 24 each participate in a glycyl lysine isopeptide (Lys-Gly) (interchain with G-Cter in SUMO) cross-link. The interval 26–64 (EPSEGRSGVPTASLGSTPYSSVPPSPTFSEPGMVGGGEA) is disordered. The minimal transactivation domain (MTD) stretch occupies residues 30 to 93 (GRSGVPTASL…SDEVLGLSPD (64 aa)). Residues 159–185 (RLKQRRRTLKNRGYAQACRSKRLQQRR) form a basic motif region. Positions 159–222 (RLKQRRRTLK…DLYKARCDRL (64 aa)) constitute a bZIP domain. The tract at residues 187–208 (LEAERARLAAQLDALRAEVARL) is leucine-zipper.

This sequence belongs to the bZIP family. Interacts with FIZ1; this interaction represses transactivation. Interacts (via the leucine-zipper domain) with CRX. Post-translationally, disumoylated at Lys-20. Sumoylation modulates the transcriptional activity of NRL on RHO and NR2E3 promoters, and is required for normal rod differentiation. Phosphorylated. As to expression, expressed in the retina (at protein level).

It is found in the cytoplasm. The protein resides in the nucleus. Acts as a transcriptional activator which regulates the expression of several rod-specific genes, including RHO and PDE6B. Also functions as a transcriptional coactivator, stimulating transcription mediated by the transcription factor CRX and NR2E3. Binds to the rhodopsin promoter in a sequence-specific manner. The polypeptide is Neural retina-specific leucine zipper protein (Nrl) (Mus musculus (Mouse)).